Consider the following 81-residue polypeptide: Small ribosomal subunit protein bS20 (81 aa).

It belongs to the bacterial ribosomal protein bS20 family.

In terms of biological role, binds directly to 16S ribosomal RNA. The chain is Small ribosomal subunit protein bS20 from Mycoplasma mycoides subsp. mycoides SC (strain CCUG 32753 / NCTC 10114 / PG1).